A 194-amino-acid polypeptide reads, in one-letter code: Holliday junction branch migration complex subunit RuvA (194 aa).

The interval 1 to 64 (MISSLNGILE…EDALSLFGFA (64 aa)) is domain I. A domain II region spans residues 65–143 (TTEELSLFET…KNWEAGVLSQ (79 aa)). A flexible linker region spans residues 144–149 (VTEANS). Positions 149–194 (SDILATLTALGYSSSEAAKAISSLGDNGDLPLEERIKLALNYFNNK) are domain III.

The protein belongs to the RuvA family. In terms of assembly, homotetramer. Forms an RuvA(8)-RuvB(12)-Holliday junction (HJ) complex. HJ DNA is sandwiched between 2 RuvA tetramers; dsDNA enters through RuvA and exits via RuvB. An RuvB hexamer assembles on each DNA strand where it exits the tetramer. Each RuvB hexamer is contacted by two RuvA subunits (via domain III) on 2 adjacent RuvB subunits; this complex drives branch migration. In the full resolvosome a probable DNA-RuvA(4)-RuvB(12)-RuvC(2) complex forms which resolves the HJ.

Its subcellular location is the cytoplasm. The RuvA-RuvB-RuvC complex processes Holliday junction (HJ) DNA during genetic recombination and DNA repair, while the RuvA-RuvB complex plays an important role in the rescue of blocked DNA replication forks via replication fork reversal (RFR). RuvA specifically binds to HJ cruciform DNA, conferring on it an open structure. The RuvB hexamer acts as an ATP-dependent pump, pulling dsDNA into and through the RuvAB complex. HJ branch migration allows RuvC to scan DNA until it finds its consensus sequence, where it cleaves and resolves the cruciform DNA. The protein is Holliday junction branch migration complex subunit RuvA of Dehalococcoides mccartyi (strain CBDB1).